The sequence spans 76 residues: Small ribosomal subunit protein bS18 (76 aa).

Belongs to the bacterial ribosomal protein bS18 family. In terms of assembly, part of the 30S ribosomal subunit. Forms a tight heterodimer with protein bS6.

Functionally, binds as a heterodimer with protein bS6 to the central domain of the 16S rRNA, where it helps stabilize the platform of the 30S subunit. The chain is Small ribosomal subunit protein bS18 from Marinomonas sp. (strain MWYL1).